A 353-amino-acid polypeptide reads, in one-letter code: Nicotinate-nucleotide--dimethylbenzimidazole phosphoribosyltransferase (353 aa).

E319 functions as the Proton acceptor in the catalytic mechanism.

The protein belongs to the CobT family.

It catalyses the reaction 5,6-dimethylbenzimidazole + nicotinate beta-D-ribonucleotide = alpha-ribazole 5'-phosphate + nicotinate + H(+). It functions in the pathway nucleoside biosynthesis; alpha-ribazole biosynthesis; alpha-ribazole from 5,6-dimethylbenzimidazole: step 1/2. In terms of biological role, catalyzes the synthesis of alpha-ribazole-5'-phosphate from nicotinate mononucleotide (NAMN) and 5,6-dimethylbenzimidazole (DMB). This is Nicotinate-nucleotide--dimethylbenzimidazole phosphoribosyltransferase from Chlorobaculum tepidum (strain ATCC 49652 / DSM 12025 / NBRC 103806 / TLS) (Chlorobium tepidum).